A 247-amino-acid chain; its full sequence is Cell division protein ZapD (247 aa).

This sequence belongs to the ZapD family. In terms of assembly, interacts with FtsZ.

The protein localises to the cytoplasm. In terms of biological role, cell division factor that enhances FtsZ-ring assembly. Directly interacts with FtsZ and promotes bundling of FtsZ protofilaments, with a reduction in FtsZ GTPase activity. The polypeptide is Cell division protein ZapD (Escherichia coli O7:K1 (strain IAI39 / ExPEC)).